The primary structure comprises 297 residues: Phosphatidylglycerol--prolipoprotein diacylglyceryl transferase (297 aa).

A run of 4 helical transmembrane segments spans residues 20–40 (FLTI…GLFV), 50–70 (INPL…IIGA), 105–125 (AVWE…LSII), and 133–153 (IHLK…QSIG). Residue arginine 154 coordinates a 1,2-diacyl-sn-glycero-3-phospho-(1'-sn-glycerol). 3 helical membrane-spanning segments follow: residues 193–213 (PTFL…IFVF), 225–245 (GFIS…IEGL), and 266–286 (AQFI…FLRL).

Belongs to the Lgt family.

It localises to the cell inner membrane. It carries out the reaction L-cysteinyl-[prolipoprotein] + a 1,2-diacyl-sn-glycero-3-phospho-(1'-sn-glycerol) = an S-1,2-diacyl-sn-glyceryl-L-cysteinyl-[prolipoprotein] + sn-glycerol 1-phosphate + H(+). The protein operates within protein modification; lipoprotein biosynthesis (diacylglyceryl transfer). Its function is as follows. Catalyzes the transfer of the diacylglyceryl group from phosphatidylglycerol to the sulfhydryl group of the N-terminal cysteine of a prolipoprotein, the first step in the formation of mature lipoproteins. The sequence is that of Phosphatidylglycerol--prolipoprotein diacylglyceryl transferase from Prochlorococcus marinus (strain MIT 9312).